A 162-amino-acid chain; its full sequence is Dihydrofolate reductase (162 aa).

The 159-residue stretch at 3–161 (KITLIAACAE…TSYAFVHYLR (159 aa)) folds into the DHFR domain. 7–9 (IAA) is a substrate binding site. Residues 8–9 (AA) and 16–21 (IGAGNA) contribute to the NADP(+) site. Residue Asp29 participates in substrate binding. 45–48 (GRKT) lines the NADP(+) pocket. Arg60 contacts substrate. NADP(+) is bound by residues 65–68 (ISRQ) and 98–103 (MGGAQI). A substrate-binding site is contributed by Thr117.

It belongs to the dihydrofolate reductase family.

The enzyme catalyses (6S)-5,6,7,8-tetrahydrofolate + NADP(+) = 7,8-dihydrofolate + NADPH + H(+). The protein operates within cofactor biosynthesis; tetrahydrofolate biosynthesis; 5,6,7,8-tetrahydrofolate from 7,8-dihydrofolate: step 1/1. Its function is as follows. Key enzyme in folate metabolism. Catalyzes an essential reaction for de novo glycine and purine synthesis, and for DNA precursor synthesis. The sequence is that of Dihydrofolate reductase (folA) from Neisseria meningitidis serogroup A / serotype 4A (strain DSM 15465 / Z2491).